The chain runs to 450 residues: Succinate-semialdehyde dehydrogenase (450 aa).

119–120 (WN) contributes to the NADP(+) binding site. Substrate is bound at residue arginine 128. NADP(+)-binding positions include 143-146 (KPAK) and 197-198 (GS). The Proton acceptor role is filled by glutamate 219. Position 220 (leucine 220) interacts with NADP(+). Arginine 247 and cysteine 253 together coordinate substrate. Cysteine 253 acts as the Nucleophile in catalysis. Glutamate 350 is an NADP(+) binding site. Residue serine 410 coordinates substrate.

It belongs to the aldehyde dehydrogenase family. Homodimer.

It catalyses the reaction succinate semialdehyde + NAD(+) + H2O = succinate + NADH + 2 H(+). The catalysed reaction is succinate semialdehyde + NADP(+) + H2O = succinate + NADPH + 2 H(+). Its pathway is alkaloid degradation; nicotine degradation. Its function is as follows. Catalyzes the NAD(P)(+)-dependent oxidation of succinate semialdehyde to succinate, which may enter the citric acid cycle. Is involved in the catabolism of 4-methylaminobutanoate produced from nicotine. Acts preferentially with NADP(+) as cosubstrate but can also use NAD(+). To a lesser extent, is active also towards butyraldehyde (8.5% of the activity observed with succinate semialdehyde) and propionaldehyde (1.6% of the activity observed with succinate semialdehyde) as substrates. This is Succinate-semialdehyde dehydrogenase (sad) from Paenarthrobacter nicotinovorans (Arthrobacter nicotinovorans).